A 159-amino-acid polypeptide reads, in one-letter code: 3-dehydroquinate dehydratase (159 aa).

Tyr31 acts as the Proton acceptor in catalysis. Positions 82, 88, and 95 each coordinate substrate. His109 (proton donor) is an active-site residue. Substrate is bound by residues Ile110 to Ser111 and Arg120.

It belongs to the type-II 3-dehydroquinase family. In terms of assembly, homododecamer.

The enzyme catalyses 3-dehydroquinate = 3-dehydroshikimate + H2O. It participates in metabolic intermediate biosynthesis; chorismate biosynthesis; chorismate from D-erythrose 4-phosphate and phosphoenolpyruvate: step 3/7. In terms of biological role, catalyzes a trans-dehydration via an enolate intermediate. The chain is 3-dehydroquinate dehydratase from Streptomyces avermitilis (strain ATCC 31267 / DSM 46492 / JCM 5070 / NBRC 14893 / NCIMB 12804 / NRRL 8165 / MA-4680).